The following is a 300-amino-acid chain: Urease accessory protein UreD (300 aa).

It belongs to the UreD family. In terms of assembly, ureD, UreF and UreG form a complex that acts as a GTP-hydrolysis-dependent molecular chaperone, activating the urease apoprotein by helping to assemble the nickel containing metallocenter of UreC. The UreE protein probably delivers the nickel.

It is found in the cytoplasm. In terms of biological role, required for maturation of urease via the functional incorporation of the urease nickel metallocenter. This Prochlorococcus marinus (strain AS9601) protein is Urease accessory protein UreD.